A 1208-amino-acid polypeptide reads, in one-letter code: Spindle pole body protein pcp1 (1208 aa).

Positions 1–17 (MSERDFNTQSPKFKDEN) are enriched in basic and acidic residues. A disordered region spans residues 1 to 91 (MSERDFNTQS…DKYNGSLGDK (91 aa)). Polar residues predominate over residues 48–64 (NDKSSFQTPLRNGSYQP). Coiled-coil stretches lie at residues 151–375 (LREQ…KENQ), 387–803 (TDSM…ANIE), 874–1091 (GTET…QSTQ), and 1177–1204 (ERMK…AKAK). Residue S906 is modified to Phosphoserine.

In terms of assembly, interacts with ccq1.

The protein resides in the nucleus. The protein localises to the cytoplasm. It is found in the cytoskeleton. Its subcellular location is the microtubule organizing center. It localises to the spindle pole body. Its function is as follows. Spindle pole body component that binds calmodulin. Overexpression of pcp1 causes the formation of supernumerary SPB-like structures and disrupts both mitotic spindle assembly and chromosome segregation. The protein is Spindle pole body protein pcp1 (pcp1) of Schizosaccharomyces pombe (strain 972 / ATCC 24843) (Fission yeast).